The chain runs to 372 residues: Aminomethyltransferase (372 aa).

It belongs to the GcvT family. In terms of assembly, the glycine cleavage system is composed of four proteins: P, T, L and H.

The catalysed reaction is N(6)-[(R)-S(8)-aminomethyldihydrolipoyl]-L-lysyl-[protein] + (6S)-5,6,7,8-tetrahydrofolate = N(6)-[(R)-dihydrolipoyl]-L-lysyl-[protein] + (6R)-5,10-methylene-5,6,7,8-tetrahydrofolate + NH4(+). The glycine cleavage system catalyzes the degradation of glycine. The chain is Aminomethyltransferase from Burkholderia mallei (strain NCTC 10247).